We begin with the raw amino-acid sequence, 152 residues long: Interleukin-2 (152 aa).

The first 20 residues, 1 to 20 (MYRMQLLSCIALTLALVANG), serve as a signal peptide directing secretion. Residue Thr-23 is glycosylated (O-linked (GalNAc...) threonine). An intrachain disulfide couples Cys-78 to Cys-126.

This sequence belongs to the IL-2 family.

The protein localises to the secreted. In terms of biological role, cytokine produced by activated CD4-positive helper T-cells and to a lesser extend activated CD8-positive T-cells and natural killer (NK) cells that plays pivotal roles in the immune response and tolerance. Binds to a receptor complex composed of either the high-affinity trimeric IL-2R (IL2RA/CD25, IL2RB/CD122 and IL2RG/CD132) or the low-affinity dimeric IL-2R (IL2RB and IL2RG). Interaction with the receptor leads to oligomerization and conformation changes in the IL-2R subunits resulting in downstream signaling starting with phosphorylation of JAK1 and JAK3. In turn, JAK1 and JAK3 phosphorylate the receptor to form a docking site leading to the phosphorylation of several substrates including STAT5. This process leads to activation of several pathways including STAT, phosphoinositide-3-kinase/PI3K and mitogen-activated protein kinase/MAPK pathways. Functions as a T-cell growth factor and can increase NK-cell cytolytic activity as well. Promotes strong proliferation of activated B-cells and subsequently immunoglobulin production. Plays a pivotal role in regulating the adaptive immune system by controlling the survival and proliferation of regulatory T-cells, which are required for the maintenance of immune tolerance. Moreover, participates in the differentiation and homeostasis of effector T-cell subsets, including Th1, Th2, Th17 as well as memory CD8-positive T-cells. The sequence is that of Interleukin-2 (IL2) from Orcinus orca (Killer whale).